A 133-amino-acid chain; its full sequence is P2Y purinoceptor 2 (133 aa).

Residues 1–26 (ISVHRCLGVLRPLHSLRWGRARYARR) lie on the Cytoplasmic side of the membrane. A helical membrane pass occupies residues 27–47 (VAFAVWVLVLYCQAPVLYFVT). At 48–74 (TSTRSSRIICHDTSARELFSHFVAYSS) the chain is on the extracellular side. Residues 75–95 (VMLSLLFAAPFAVILVCYVLM) form a helical membrane-spanning segment. Residues 96–116 (ARRLLKPAYGTSGGLPRAKRK) lie on the Cytoplasmic side of the membrane. A helical membrane pass occupies residues 117–133 (SVRTIAIVLTVFVLCFL).

It belongs to the G-protein coupled receptor 1 family.

It localises to the cell membrane. Functionally, receptor for ATP and UTP coupled to G-proteins that activate a phosphatidylinositol-calcium second messenger system. The protein is P2Y purinoceptor 2 (P2RY2) of Bos taurus (Bovine).